A 188-amino-acid chain; its full sequence is Ribosome-recycling factor (188 aa).

Belongs to the RRF family.

Its subcellular location is the cytoplasm. In terms of biological role, responsible for the release of ribosomes from messenger RNA at the termination of protein biosynthesis. May increase the efficiency of translation by recycling ribosomes from one round of translation to another. This Gluconacetobacter diazotrophicus (strain ATCC 49037 / DSM 5601 / CCUG 37298 / CIP 103539 / LMG 7603 / PAl5) protein is Ribosome-recycling factor.